The primary structure comprises 178 residues: Large ribosomal subunit protein uL6 (178 aa).

Belongs to the universal ribosomal protein uL6 family. As to quaternary structure, part of the 50S ribosomal subunit.

This protein binds to the 23S rRNA, and is important in its secondary structure. It is located near the subunit interface in the base of the L7/L12 stalk, and near the tRNA binding site of the peptidyltransferase center. This is Large ribosomal subunit protein uL6 from Lactococcus lactis subsp. cremoris (strain SK11).